The sequence spans 353 residues: G-protein coupled estrogen receptor 1 (353 aa).

The Extracellular portion of the chain corresponds to 1–40 (MEEQTTNVIQIYVNGTEQFNASFDFNITDVKESTDTYEFY). The helical transmembrane segment at 41–61 (IIGLFLSCLYTIFLFPIGFIG) threads the bilayer. Over 62–81 (NILILVVNLNHRERMTIPDL) the chain is Cytoplasmic. The helical transmembrane segment at 82 to 102 (YFVNLAVADLILVADSLIEVF) threads the bilayer. Residues 103–112 (NLNEKYYDYA) are Extracellular-facing. The chain crosses the membrane as a helical span at residues 113 to 133 (VLCTFMSLFLQVNMYSSIFFL). C115 and C192 are oxidised to a cystine. Residues 134 to 160 (TWMSFDRYVALTSSMSSSPLRTMQHAK) are Cytoplasmic-facing. The helical transmembrane segment at 161–181 (LSCSLIWMASILATLLPFTIV) threads the bilayer. Over 182 to 202 (QTQHTGEVHFCFANVFEIQWL) the chain is Extracellular. A helical membrane pass occupies residues 203–223 (EVTIGFLIPFSIIGLCYSLIV). At 224-245 (RTLMRAQKHKGLWPRRQKALRM) the chain is on the cytoplasmic side. The helical transmembrane segment at 246-266 (IVVVVLVFFICWLPENVFISI) threads the bilayer. The Extracellular segment spans residues 267–292 (QLLQGTADPSKRTDTTLWHDYPLTGH). A helical membrane pass occupies residues 293–313 (IVNLAAFSNSCLNPIIYSFLG). Topologically, residues 314-353 (ETFRDKLRLFIKRKASWSVVYRFCNHTLDLQIPVRSESEV) are cytoplasmic.

It belongs to the G-protein coupled receptor 1 family. In terms of assembly, homodimer. Heterodimer. Expressed in brain regions that are known to control reproduction and sex behavior. Expressed in ovary, muscle and intestine. Expressed in early germ cells of the testis, including the spermatogonia, spermatocytes, and somatic cells such as Sertoli cells.

Its subcellular location is the nucleus. The protein resides in the cytoplasm. The protein localises to the perinuclear region. It is found in the cytoskeleton. It localises to the cytoplasmic vesicle membrane. Its subcellular location is the cell membrane. The protein resides in the basolateral cell membrane. The protein localises to the endoplasmic reticulum membrane. It is found in the early endosome. It localises to the recycling endosome. Its subcellular location is the golgi apparatus. The protein resides in the trans-Golgi network. The protein localises to the golgi apparatus membrane. It is found in the cell projection. It localises to the dendrite. Its subcellular location is the dendritic spine membrane. The protein resides in the axon. The protein localises to the postsynaptic density. It is found in the mitochondrion membrane. Membrane G-protein coupled estrogen receptor that binds to 17-beta-estradiol (E2) with high affinity, leading to rapid and transient activation of numerous intracellular signaling pathways. Plays a role in the embryonic development of sensory and motor neurons. Specifically induces apoptosis and reduces proliferation of brain cells. Involved in maintenance of meiotic arrest in oocytes. The protein is G-protein coupled estrogen receptor 1 (gper1) of Danio rerio (Zebrafish).